The following is a 146-amino-acid chain: MKLHELRAAEGANKASKRVGRGTGSGLGKTSGKGQNGQNSRSGGGVRPGFEGGQMPLYRRLPKRGFKNIFAKEYAAINLDRLNCFEDGTVVTPELLVEKRVVKKVKDGVKILGNGNIEKKLTVKAAKFSKSAIEKIEAAGGKVEVI.

Positions 1-56 are disordered; the sequence is MKLHELRAAEGANKASKRVGRGTGSGLGKTSGKGQNGQNSRSGGGVRPGFEGGQMP. Composition is skewed to gly residues over residues 21–35 and 42–52; these read RGTG…GKGQ and SGGGVRPGFEG.

This sequence belongs to the universal ribosomal protein uL15 family. As to quaternary structure, part of the 50S ribosomal subunit.

In terms of biological role, binds to the 23S rRNA. The chain is Large ribosomal subunit protein uL15 from Clostridium botulinum (strain Loch Maree / Type A3).